Consider the following 108-residue polypeptide: Insulin (108 aa).

Residues 1–23 (MALWILLPLLALLILWGPDPAQA) form the signal peptide. 2 disulfide bridges follow: cysteine 30-cysteine 94 and cysteine 43-cysteine 107. Positions 57-88 (EVEDPQVGQVELGAGPGAGSEQTLALEVARQA) are cleaved as a propeptide — c peptide.

Belongs to the insulin family. Heterodimer of a B chain and an A chain linked by two disulfide bonds.

The protein localises to the secreted. Its function is as follows. Insulin decreases blood glucose concentration. It increases cell permeability to monosaccharides, amino acids and fatty acids. It accelerates glycolysis, the pentose phosphate cycle, and glycogen synthesis in liver. This is Insulin (INS) from Rodentia sp.